Reading from the N-terminus, the 418-residue chain is Glutamyl-tRNA reductase (418 aa).

Residues 49 to 52 (TCNR), Ser-109, 114 to 116 (EPQ), and Gln-120 each bind substrate. Cys-50 (nucleophile) is an active-site residue. 189-194 (GAGETI) contacts NADP(+).

The protein belongs to the glutamyl-tRNA reductase family. Homodimer.

It catalyses the reaction (S)-4-amino-5-oxopentanoate + tRNA(Glu) + NADP(+) = L-glutamyl-tRNA(Glu) + NADPH + H(+). The protein operates within porphyrin-containing compound metabolism; protoporphyrin-IX biosynthesis; 5-aminolevulinate from L-glutamyl-tRNA(Glu): step 1/2. Its function is as follows. Catalyzes the NADPH-dependent reduction of glutamyl-tRNA(Glu) to glutamate 1-semialdehyde (GSA). The protein is Glutamyl-tRNA reductase of Escherichia coli O1:K1 / APEC.